We begin with the raw amino-acid sequence, 380 residues long: Cytochrome b (380 aa).

The next 4 helical transmembrane spans lie at 34 to 54, 78 to 100, 113 to 133, and 179 to 199; these read FGSL…ILAM, WLMR…AHMG, TWNI…MGYV, and FFAF…VHLL. Heme b contacts are provided by H84 and H98. The heme b site is built by H183 and H197. H202 is a binding site for a ubiquinone. A run of 4 helical transmembrane segments spans residues 225–245, 289–309, 324–344, and 349–369; these read FSWK…TITL, LGGV…MLTH, VIFW…AAPV, and ITLG…APMI.

It belongs to the cytochrome b family. In terms of assembly, the main subunits of complex b-c1 are: cytochrome b, cytochrome c1 and the Rieske protein. Requires heme b as cofactor.

The protein resides in the mitochondrion inner membrane. Functionally, component of the ubiquinol-cytochrome c reductase complex (complex III or cytochrome b-c1 complex) that is part of the mitochondrial respiratory chain. The b-c1 complex mediates electron transfer from ubiquinol to cytochrome c. Contributes to the generation of a proton gradient across the mitochondrial membrane that is then used for ATP synthesis. This is Cytochrome b (mt:Cyt-b) from Xenoturbella bocki (Marine worm).